The chain runs to 176 residues: uncharacterized protein (176 aa).

Positions 71–176 (RDDMSSDSDG…YSTDDDEDDY (106 aa)) are disordered. 2 stretches are compositionally biased toward low complexity: residues 77–87 (DSDGPAASPPG) and 100–109 (SYSSSDSSAR). Basic residues predominate over residues 140–152 (KARRPARKKKRIG).

This is an uncharacterized protein from Orgyia pseudotsugata multicapsid polyhedrosis virus (OpMNPV).